A 211-amino-acid chain; its full sequence is FMN-dependent NADH:quinone oxidoreductase 2 (211 aa).

102-105 is an FMN binding site; that stretch reads MWNF.

The protein belongs to the azoreductase type 1 family. In terms of assembly, homodimer. Requires FMN as cofactor.

It carries out the reaction 2 a quinone + NADH + H(+) = 2 a 1,4-benzosemiquinone + NAD(+). The catalysed reaction is N,N-dimethyl-1,4-phenylenediamine + anthranilate + 2 NAD(+) = 2-(4-dimethylaminophenyl)diazenylbenzoate + 2 NADH + 2 H(+). Quinone reductase that provides resistance to thiol-specific stress caused by electrophilic quinones. Its function is as follows. Also exhibits azoreductase activity. Catalyzes the reductive cleavage of the azo bond in aromatic azo compounds to the corresponding amines. In Bacillus thuringiensis subsp. konkukian (strain 97-27), this protein is FMN-dependent NADH:quinone oxidoreductase 2.